Consider the following 95-residue polypeptide: Aspartyl/glutamyl-tRNA(Asn/Gln) amidotransferase subunit C (95 aa).

It belongs to the GatC family. Heterotrimer of A, B and C subunits.

The catalysed reaction is L-glutamyl-tRNA(Gln) + L-glutamine + ATP + H2O = L-glutaminyl-tRNA(Gln) + L-glutamate + ADP + phosphate + H(+). It carries out the reaction L-aspartyl-tRNA(Asn) + L-glutamine + ATP + H2O = L-asparaginyl-tRNA(Asn) + L-glutamate + ADP + phosphate + 2 H(+). Functionally, allows the formation of correctly charged Asn-tRNA(Asn) or Gln-tRNA(Gln) through the transamidation of misacylated Asp-tRNA(Asn) or Glu-tRNA(Gln) in organisms which lack either or both of asparaginyl-tRNA or glutaminyl-tRNA synthetases. The reaction takes place in the presence of glutamine and ATP through an activated phospho-Asp-tRNA(Asn) or phospho-Glu-tRNA(Gln). The protein is Aspartyl/glutamyl-tRNA(Asn/Gln) amidotransferase subunit C of Methylobacterium sp. (strain 4-46).